A 612-amino-acid chain; its full sequence is MPAYRSRTTTHGRNMAGARGLWRATGMKDSDFGKPIIAVVNSFTQFVPGHVHLKDLGQLVAREIEAAGGVAKEFNTIAVDDGIAMGHDGMLYSLPSREIIADSVEYMVNAHCADAMVCISNCDKITPGMLMAALRLNIPAVFVSGGPMEAGKVVLHGKTHALDLVDAMVAAADDKVSDEDVQIIERSACPTCGSCSGMFTANSMNCLTEALGLSLPGNGSTLATHADRKRLFVEAGHLIVDLARRYYEQEDERVLPRNIATKQAFENAMALDIAMGGSTNTVLHILAAAYEGEIDFTMDDIDRLSRKVPCLSKVAPAKADVHMEDVHRAGGIMSILGELDKGGLINRDCPTVHAETLGDAIDRWDITRTSSDTVRKFFRAAPGGIPTQVAFSQEARWDELDTDRENGVIRSVEHPFSKDGGLAVLKGNIALDGCIVKTAGVDESILKFSGPARVFESQDAAVKGILANEIKAGDVVVIRYEGPKGGPGMQEMLYPTSYLKSKGLGKACALITDGRFSGGTSGLSIGHVSPEAANGGTIGLVREGDMIDIDIPNRTISLRVDEAELAARRTEQDAKGWKPVEQRKRRVTTALKAYAAFATSADRGAVRDLGDR.

Asp-81 contributes to the Mg(2+) binding site. Cys-122 serves as a coordination point for [2Fe-2S] cluster. Mg(2+) is bound by residues Asp-123 and Lys-124. Lys-124 is subject to N6-carboxylysine. Cys-195 is a [2Fe-2S] cluster binding site. A Mg(2+)-binding site is contributed by Glu-491. Ser-517 (proton acceptor) is an active-site residue.

This sequence belongs to the IlvD/Edd family. Homodimer. It depends on [2Fe-2S] cluster as a cofactor. Requires Mg(2+) as cofactor.

The enzyme catalyses (2R)-2,3-dihydroxy-3-methylbutanoate = 3-methyl-2-oxobutanoate + H2O. It catalyses the reaction (2R,3R)-2,3-dihydroxy-3-methylpentanoate = (S)-3-methyl-2-oxopentanoate + H2O. The protein operates within amino-acid biosynthesis; L-isoleucine biosynthesis; L-isoleucine from 2-oxobutanoate: step 3/4. It functions in the pathway amino-acid biosynthesis; L-valine biosynthesis; L-valine from pyruvate: step 3/4. In terms of biological role, functions in the biosynthesis of branched-chain amino acids. Catalyzes the dehydration of (2R,3R)-2,3-dihydroxy-3-methylpentanoate (2,3-dihydroxy-3-methylvalerate) into 2-oxo-3-methylpentanoate (2-oxo-3-methylvalerate) and of (2R)-2,3-dihydroxy-3-methylbutanoate (2,3-dihydroxyisovalerate) into 2-oxo-3-methylbutanoate (2-oxoisovalerate), the penultimate precursor to L-isoleucine and L-valine, respectively. The sequence is that of Dihydroxy-acid dehydratase from Rhizobium meliloti (strain 1021) (Ensifer meliloti).